The primary structure comprises 641 residues: Epsin-2 (641 aa).

A 1,2-diacyl-sn-glycero-3-phospho-(1D-myo-inositol-4,5-bisphosphate) contacts are provided by R8, K11, R25, N30, R63, and H73. Residues 12 to 144 (NIVNNYSEAE…KDEERLKAER (133 aa)) enclose the ENTH domain. R153 and Q156 each carry phosphoserine. The segment covering 163–181 (SNQITFGRGSSQPNLSTSH) has biased composition (polar residues). Disordered regions lie at residues 163-214 (SNQI…GAPL) and 255-275 (RATS…TSGE). Position 170 is an omega-N-methylarginine (R170). Residues S173, S192, and S195 each carry the phosphoserine modification. Residues 259–273 (PRVSSELEQARPQTS) are compositionally biased toward polar residues. UIM domains lie at 275 to 294 (EEEL…AEQE) and 300 to 319 (GDDL…TVKI). A disordered region spans residues 340–425 (ALPSSGPAAQ…QPASSAGKRA (86 aa)). Repeat copies occupy residues 352–354 (EPW), 364–366 (NPW), 377–379 (DPW), 391–393 (DPW), 409–411 (DPW), and 427–429 (DAW). Residues 352–639 (EPWGPSASTN…AQATGTTNPF (288 aa)) are 6 X 3 AA repeats of [DE]-P-W. Over residues 408–421 (SDPWAASQQPASSA) the composition is skewed to low complexity. Residues 470-512 (TAESVTSLPSQNNGTTSPDPFESQPLTVASSKPSSARKTPESF) are disordered. Residues 472-506 (ESVTSLPSQNNGTTSPDPFESQPLTVASSKPSSAR) are compositionally biased toward polar residues. S486 is modified (phosphoserine). The residue at position 508 (T508) is a Phosphothreonine. 2 repeat units span residues 537 to 539 (NPF) and 552 to 554 (NPF). The interval 537–639 (NPFLAPGAPA…AQATGTTNPF (103 aa)) is 3 X 3 AA repeats of N-P-F. Position 570 is a phosphoserine (S570). Copy 3 of the repeat occupies 637-639 (NPF).

It belongs to the epsin family. Binds EPS15. Interacts with ITSN1. Binds AP-2 and clathrin. Interacts with UBQLN2. Ubiquitinated. Highest expression is found in brain. Detected at lower levels in lung and liver.

It is found in the cytoplasm. The protein localises to the cytoplasmic vesicle. It localises to the clathrin-coated vesicle. Functionally, plays a role in the formation of clathrin-coated invaginations and endocytosis. The chain is Epsin-2 (EPN2) from Homo sapiens (Human).